A 417-amino-acid chain; its full sequence is Cyanophycinase (417 aa).

The signal sequence occupies residues 1 to 23 (MIRSFIRSSALLLALLPVTGYSA). Residues Ser-169, Asp-188, and His-222 each act as charge relay system in the active site.

It belongs to the peptidase S51 family.

Its subcellular location is the secreted. The enzyme catalyses [L-4-(L-arginin-2-N-yl)aspartate](n) + H2O = [L-4-(L-arginin-2-N-yl)aspartate](n-1) + L-4-(L-arginin-2-N-yl)aspartate. Inhibited by serine protease inhibitors. Inhibited by N-Bromo-succinimide. In terms of biological role, exopeptidase that catalyzes the hydrolytic cleavage of multi-L-arginyl-poly-L-aspartic acid (cyanophycin; a water-insoluble reserve polymer) into aspartate-arginine dipeptides. The protein is Cyanophycinase (cphE) of Pseudomonas anguilliseptica.